The chain runs to 266 residues: Undecaprenyl-diphosphatase (266 aa).

The next 8 membrane-spanning stretches (helical) occupy residues 1 to 21, 39 to 59, 87 to 107, 111 to 131, 144 to 164, 183 to 203, 218 to 238, and 246 to 266; these read MDTFQVIILALIQGLTEFLPI, QGLSFDVAVNTGSLLAVVMYF, WWIILATIPAVIVGFSAKGFI, FRSIEVIAATTIIFGLLLWWA, VGWKKALVIGIAQAMALIPGT, AAARFSFLMSVPVSLGAAILV, ALGLGIVVSFIAAYICIHYFL, and MTPFVVYRLALGAVLCGFIFL.

The protein belongs to the UppP family.

The protein localises to the cell inner membrane. It carries out the reaction di-trans,octa-cis-undecaprenyl diphosphate + H2O = di-trans,octa-cis-undecaprenyl phosphate + phosphate + H(+). Its function is as follows. Catalyzes the dephosphorylation of undecaprenyl diphosphate (UPP). Confers resistance to bacitracin. The sequence is that of Undecaprenyl-diphosphatase from Shewanella halifaxensis (strain HAW-EB4).